The sequence spans 218 residues: MATRSPGVVISDDEPGYDLDLFCIPNHYAEDLERVFIPHGLIMDRTERLARDVMKEMGGHHIVALCVLKGGYKFFADLLDYIKALNRNSDRSIPMTVDFIRLKSYCNDQSTGDIKVIGGDDLSTLTGKNVLIVEDIIDTGKTMQTLLSLVRQYNPKMVKVASLLVKRTPRSVGYKPDFVGFEIPDKFVVGYALDYNEYFRDLNHVCVISETGKAKYKA.

Residue Ala-2 is modified to N-acetylalanine. Lys-69 is a binding site for GMP. The residue at position 103 (Lys-103) is an N6-acetyllysine. Lys-115 participates in a covalent cross-link: Glycyl lysine isopeptide (Lys-Gly) (interchain with G-Cter in SUMO1); alternate. Lys-115 participates in a covalent cross-link: Glycyl lysine isopeptide (Lys-Gly) (interchain with G-Cter in SUMO2); alternate. GMP is bound by residues 134-142 (EDIIDTGKT), Lys-166, 186-188 (KFV), and Asp-194. The active-site Proton acceptor is the Asp-138. Thr-142 carries the phosphothreonine modification. Asp-194 contacts Mg(2+).

This sequence belongs to the purine/pyrimidine phosphoribosyltransferase family. In terms of assembly, homotetramer. Mg(2+) is required as a cofactor.

Its subcellular location is the cytoplasm. It catalyses the reaction IMP + diphosphate = hypoxanthine + 5-phospho-alpha-D-ribose 1-diphosphate. It carries out the reaction GMP + diphosphate = guanine + 5-phospho-alpha-D-ribose 1-diphosphate. It participates in purine metabolism; IMP biosynthesis via salvage pathway; IMP from hypoxanthine: step 1/1. In terms of biological role, converts guanine to guanosine monophosphate, and hypoxanthine to inosine monophosphate. Transfers the 5-phosphoribosyl group from 5-phosphoribosylpyrophosphate onto the purine. Plays a central role in the generation of purine nucleotides through the purine salvage pathway. The polypeptide is Hypoxanthine-guanine phosphoribosyltransferase (HPRT1) (Homo sapiens (Human)).